The primary structure comprises 528 residues: Probable serine/threonine-protein kinase 380R (528 aa).

Residues 70 to 96 (VKIPKSKSPPKVKSPKRKKSPVRRRVS) form a disordered region. The span at 73–95 (PKSKSPPKVKSPKRKKSPVRRRV) shows a compositional bias: basic residues. The Protein kinase domain maps to 156 to 507 (FTNVKAVGKG…LANVLIHKIF (352 aa)). ATP-binding positions include 162–170 (VGKGSFGTV) and K187. The active-site Proton acceptor is the D302.

It belongs to the protein kinase superfamily. Ser/Thr protein kinase family.

It catalyses the reaction L-seryl-[protein] + ATP = O-phospho-L-seryl-[protein] + ADP + H(+). It carries out the reaction L-threonyl-[protein] + ATP = O-phospho-L-threonyl-[protein] + ADP + H(+). This is Probable serine/threonine-protein kinase 380R from Invertebrate iridescent virus 6 (IIV-6).